Consider the following 338-residue polypeptide: Phenylalanine--tRNA ligase alpha subunit (338 aa).

Glu252 contacts Mg(2+).

The protein belongs to the class-II aminoacyl-tRNA synthetase family. Phe-tRNA synthetase alpha subunit type 1 subfamily. As to quaternary structure, tetramer of two alpha and two beta subunits. The cofactor is Mg(2+).

The protein resides in the cytoplasm. The enzyme catalyses tRNA(Phe) + L-phenylalanine + ATP = L-phenylalanyl-tRNA(Phe) + AMP + diphosphate + H(+). The polypeptide is Phenylalanine--tRNA ligase alpha subunit (Pseudomonas fluorescens (strain SBW25)).